Reading from the N-terminus, the 289-residue chain is Bis(5'-nucleosyl)-tetraphosphatase, symmetrical (289 aa).

It belongs to the Ap4A hydrolase family.

The enzyme catalyses P(1),P(4)-bis(5'-adenosyl) tetraphosphate + H2O = 2 ADP + 2 H(+). Functionally, hydrolyzes diadenosine 5',5'''-P1,P4-tetraphosphate to yield ADP. This Pseudomonas fluorescens (strain ATCC BAA-477 / NRRL B-23932 / Pf-5) protein is Bis(5'-nucleosyl)-tetraphosphatase, symmetrical.